The following is a 111-amino-acid chain: Ribosome-binding factor A (111 aa).

Belongs to the RbfA family. As to quaternary structure, monomer. Binds 30S ribosomal subunits, but not 50S ribosomal subunits or 70S ribosomes.

The protein resides in the cytoplasm. Functionally, one of several proteins that assist in the late maturation steps of the functional core of the 30S ribosomal subunit. Associates with free 30S ribosomal subunits (but not with 30S subunits that are part of 70S ribosomes or polysomes). Required for efficient processing of 16S rRNA. May interact with the 5'-terminal helix region of 16S rRNA. The polypeptide is Ribosome-binding factor A (Helicobacter pylori (strain ATCC 700392 / 26695) (Campylobacter pylori)).